The chain runs to 228 residues: MKKKAVILLSGGPDSTTVLEIVSKTDYEIYALSFNYHRRNSLEVQKIQGLIKDYNVKQHRVINIDLQSFIGSALTDDNIDVPKFKNTDQLPSDIPVTYVPARNTIFLSYALGVAEVIGARDIFIGVHTNDYTNYPDCRPEYIKSFEAMANLATRVGVNGEKITIHAPLINMTKEQIIKKGLELGVDYSKTISCYDPTEDGLSCGQCLSCIARLDAFKRNNVQDPIKYV.

9–19 contributes to the ATP binding site; it reads LSGGPDSTTVL. Residues Cys193, Cys203, Cys206, and Cys209 each coordinate Zn(2+).

This sequence belongs to the QueC family. Requires Zn(2+) as cofactor.

It catalyses the reaction 7-carboxy-7-deazaguanine + NH4(+) + ATP = 7-cyano-7-deazaguanine + ADP + phosphate + H2O + H(+). The protein operates within purine metabolism; 7-cyano-7-deazaguanine biosynthesis. Catalyzes the ATP-dependent conversion of 7-carboxy-7-deazaguanine (CDG) to 7-cyano-7-deazaguanine (preQ(0)). The sequence is that of 7-cyano-7-deazaguanine synthase from Rickettsia africae (strain ESF-5).